Consider the following 325-residue polypeptide: Peroxidase 68 (325 aa).

Positions Met-1–Ala-28 are cleaved as a signal peptide. Residue Gln-29 is modified to Pyrrolidone carboxylic acid. 4 disulfide bridges follow: Cys-39–Cys-119, Cys-72–Cys-77, Cys-125–Cys-321, and Cys-205–Cys-230. Catalysis depends on His-70, which acts as the Proton acceptor. 5 residues coordinate Ca(2+): Asp-71, Val-74, Gly-76, Asp-78, and Ser-80. Asn-99 is a glycosylation site (N-linked (GlcNAc...) asparagine). Pro-168 is a binding site for substrate. Residue His-198 participates in heme b binding. Thr-199 contributes to the Ca(2+) binding site. Residue Asn-214 is glycosylated (N-linked (GlcNAc...) asparagine). The Ca(2+) site is built by Asp-245, Thr-248, and Asp-253.

It belongs to the peroxidase family. Classical plant (class III) peroxidase subfamily. Requires heme b as cofactor. Ca(2+) serves as cofactor.

Its subcellular location is the secreted. The catalysed reaction is 2 a phenolic donor + H2O2 = 2 a phenolic radical donor + 2 H2O. Its function is as follows. Removal of H(2)O(2), oxidation of toxic reductants, biosynthesis and degradation of lignin, suberization, auxin catabolism, response to environmental stresses such as wounding, pathogen attack and oxidative stress. These functions might be dependent on each isozyme/isoform in each plant tissue. This chain is Peroxidase 68 (PER68), found in Arabidopsis thaliana (Mouse-ear cress).